We begin with the raw amino-acid sequence, 675 residues long: Protein C-mannosyl-transferase DPY19L1 (675 aa).

Residues 1–22 (MEGRPPPEGRPPPRPRTGRAPR) form a disordered region. Helical transmembrane passes span 66 to 88 (LYYSYFKTIVEAPSFLNGVWMIM), 156 to 176 (ACFYVAVIFILNGLMMALFFI), 186 to 208 (LGGLVTVLCFFFNHGECTRVMWT), 236 to 254 (LYRGSLIALCISNVFFMLP), 260 to 279 (FVLLTQIASLFAVYVVGYID), 286 to 303 (IIYIHMISLALCFVLMFG), 309 to 325 (TSYYASSLVIIWGILAM), 334 to 354 (VSELSLWVIQGCFWLFGTVIL), 414 to 434 (VVLVVFVAIVRKIISDMWGVL), 449 to 469 (GELVYHALQLLAYTALGILIM), and 491 to 511 (LFGWLFCKVHPGAIVFAILAA).

Belongs to the dpy-19 family. As to expression, widely expressed.

It is found in the endoplasmic reticulum membrane. The enzyme catalyses L-tryptophyl-[protein] + a di-trans,poly-cis-dolichyl beta-D-mannosyl phosphate = C-alpha-D-mannosyl-L-tryptophyl-[protein] + a di-trans,poly-cis-dolichyl phosphate + H(+). Its pathway is protein modification; protein glycosylation. C-mannosyltransferase that mediates the C-mannosylation tryptophan residues on target proteins. The reaction occurs on the luminal side of the endoplasmic reticulum and involves the transfer of a mannose unit from a dolichylphosphate mannose (Dol-P-Man) donor to an acceptor protein containing a WxxW consensus sequence. C-mannosylates the first two tryptophans in the WxxWxxWxxC motif in thrombospondin (TSP) type-1 of UNC5A. Regulates neurite extension during development. The sequence is that of Protein C-mannosyl-transferase DPY19L1 (DPY19L1) from Homo sapiens (Human).